The following is a 467-amino-acid chain: ATP synthase subunit beta (467 aa).

154 to 161 (GGAGVGKT) contributes to the ATP binding site.

The protein belongs to the ATPase alpha/beta chains family. As to quaternary structure, F-type ATPases have 2 components, CF(1) - the catalytic core - and CF(0) - the membrane proton channel. CF(1) has five subunits: alpha(3), beta(3), gamma(1), delta(1), epsilon(1). CF(0) has three main subunits: a(1), b(2) and c(9-12). The alpha and beta chains form an alternating ring which encloses part of the gamma chain. CF(1) is attached to CF(0) by a central stalk formed by the gamma and epsilon chains, while a peripheral stalk is formed by the delta and b chains.

The protein resides in the cell inner membrane. The enzyme catalyses ATP + H2O + 4 H(+)(in) = ADP + phosphate + 5 H(+)(out). Its function is as follows. Produces ATP from ADP in the presence of a proton gradient across the membrane. The catalytic sites are hosted primarily by the beta subunits. In Leptospira borgpetersenii serovar Hardjo-bovis (strain JB197), this protein is ATP synthase subunit beta.